The sequence spans 644 residues: Zinc finger protein 74 (644 aa).

Positions 43-114 (VSFKDVAVDF…QREVPRGPCP (72 aa)) constitute a KRAB domain. C2H2-type zinc fingers lie at residues 248-270 (FVCGECGKAFRQSSSLTLHRRWH), 276-298 (YKCDECGKAFTWSTNLLEHRRIH), 304-326 (FFCGECGKAFSCHSSLNVHQRIH), 332-354 (YKCSACEKAFSCSSLLSMHLRVH), 360-382 (YRCGECGKAFNQRTHLTRHHRIH), 388-410 (YQCGSCGKAFTCHSSLTVHEKIH), 416-438 (FKCSDCEKAFNSRSRLTLHQRTH), 444-466 (FKCADCGKGFSCHAYLLVHRRIH), 472-494 (FKCNECGKAFSSHAYLIVHRRIH), 500-522 (FDCSQCWKAFSCHSSLIVHQRIH), 528-550 (YKCSECGRAFSQNHCLIKHQKIH), and 556-578 (FKCEKCGEMFNWSSHLTEHQRLH). A Glycyl lysine isopeptide (Lys-Gly) (interchain with G-Cter in SUMO2) cross-link involves residue K582.

The protein belongs to the krueppel C2H2-type zinc-finger protein family. As to expression, highly expressed in the fetal brain.

It localises to the nucleus. Functionally, may play a role in RNA metabolism. This Homo sapiens (Human) protein is Zinc finger protein 74 (ZNF74).